A 466-amino-acid polypeptide reads, in one-letter code: ATP synthase subunit beta (466 aa).

Residue G153 to T160 participates in ATP binding.

It belongs to the ATPase alpha/beta chains family. As to quaternary structure, F-type ATPases have 2 components, CF(1) - the catalytic core - and CF(0) - the membrane proton channel. CF(1) has five subunits: alpha(3), beta(3), gamma(1), delta(1), epsilon(1). CF(0) has three main subunits: a(1), b(2) and c(9-12). The alpha and beta chains form an alternating ring which encloses part of the gamma chain. CF(1) is attached to CF(0) by a central stalk formed by the gamma and epsilon chains, while a peripheral stalk is formed by the delta and b chains.

Its subcellular location is the cell membrane. It catalyses the reaction ATP + H2O + 4 H(+)(in) = ADP + phosphate + 5 H(+)(out). Functionally, produces ATP from ADP in the presence of a proton gradient across the membrane. The catalytic sites are hosted primarily by the beta subunits. The protein is ATP synthase subunit beta of Oenococcus oeni (strain ATCC BAA-331 / PSU-1).